A 485-amino-acid chain; its full sequence is Glutamyl-tRNA(Gln) amidotransferase subunit A (485 aa).

Catalysis depends on charge relay system residues Lys79 and Ser154. Catalysis depends on Ser178, which acts as the Acyl-ester intermediate.

It belongs to the amidase family. GatA subfamily. In terms of assembly, heterotrimer of A, B and C subunits.

The enzyme catalyses L-glutamyl-tRNA(Gln) + L-glutamine + ATP + H2O = L-glutaminyl-tRNA(Gln) + L-glutamate + ADP + phosphate + H(+). Its function is as follows. Allows the formation of correctly charged Gln-tRNA(Gln) through the transamidation of misacylated Glu-tRNA(Gln) in organisms which lack glutaminyl-tRNA synthetase. The reaction takes place in the presence of glutamine and ATP through an activated gamma-phospho-Glu-tRNA(Gln). This Clostridium botulinum (strain Okra / Type B1) protein is Glutamyl-tRNA(Gln) amidotransferase subunit A.